Here is a 369-residue protein sequence, read N- to C-terminus: Peptide chain release factor 2 (369 aa).

Position 251 is an N5-methylglutamine (Q251).

Belongs to the prokaryotic/mitochondrial release factor family. In terms of processing, methylated by PrmC. Methylation increases the termination efficiency of RF2.

The protein localises to the cytoplasm. Its function is as follows. Peptide chain release factor 2 directs the termination of translation in response to the peptide chain termination codons UGA and UAA. The polypeptide is Peptide chain release factor 2 (prfB) (Chlamydia muridarum (strain MoPn / Nigg)).